The sequence spans 122 residues: Cytochrome c3 hydrogenase large chain (122 aa).

Fe cation is required as a cofactor.

It carries out the reaction 2 Fe(III)-[cytochrome c3] + H2 = 2 Fe(II)-[cytochrome c3] + 2 H(+). This Acidithiobacillus ferrooxidans (Thiobacillus ferrooxidans) protein is Cytochrome c3 hydrogenase large chain (hoxG).